A 252-amino-acid polypeptide reads, in one-letter code: uncharacterized protein (252 aa).

Residues 106 to 140 (IQSLHARRDHLDNAVEQLKSQLSRLDSSVAILKSQ) are a coiled coil.

This is an uncharacterized protein from Caenorhabditis elegans.